Consider the following 281-residue polypeptide: Beta-etherase (281 aa).

Positions 11–87 (DLQLESGCTI…YLDEKYPDRP (77 aa)) constitute a GST N-terminal domain. The segment at 244 to 281 (GDPEPFVRQTGPAGAGGQALNKGPQTTKMPPRVAEKAD) is disordered.

This sequence belongs to the GST superfamily.

It localises to the cell inner membrane. Its function is as follows. Able to degrade various dimeric lignin compounds. Catalyzes the unique and reductive cleavage of arylglycerol-beta-aryl ether. The protein is Beta-etherase (ligE) of Sphingobium sp. (strain NBRC 103272 / SYK-6).